Consider the following 103-residue polypeptide: Large ribosomal subunit protein bL21 (103 aa).

This sequence belongs to the bacterial ribosomal protein bL21 family. In terms of assembly, part of the 50S ribosomal subunit. Contacts protein L20.

In terms of biological role, this protein binds to 23S rRNA in the presence of protein L20. The chain is Large ribosomal subunit protein bL21 from Actinobacillus pleuropneumoniae serotype 7 (strain AP76).